A 122-amino-acid chain; its full sequence is Small ribosomal subunit protein uS13 (122 aa).

The tract at residues 98–122 (VRGQRTKTNARTRKGKRKTVGAKAK) is disordered.

It belongs to the universal ribosomal protein uS13 family. As to quaternary structure, part of the 30S ribosomal subunit. Forms a loose heterodimer with protein S19. Forms two bridges to the 50S subunit in the 70S ribosome.

In terms of biological role, located at the top of the head of the 30S subunit, it contacts several helices of the 16S rRNA. In the 70S ribosome it contacts the 23S rRNA (bridge B1a) and protein L5 of the 50S subunit (bridge B1b), connecting the 2 subunits; these bridges are implicated in subunit movement. Contacts the tRNAs in the A and P-sites. This Nautilia profundicola (strain ATCC BAA-1463 / DSM 18972 / AmH) protein is Small ribosomal subunit protein uS13.